Consider the following 384-residue polypeptide: Tetraacyldisaccharide 4'-kinase (384 aa).

72–79 contributes to the ATP binding site; sequence TAGGTGKT.

It belongs to the LpxK family.

It carries out the reaction a lipid A disaccharide + ATP = a lipid IVA + ADP + H(+). It functions in the pathway glycolipid biosynthesis; lipid IV(A) biosynthesis; lipid IV(A) from (3R)-3-hydroxytetradecanoyl-[acyl-carrier-protein] and UDP-N-acetyl-alpha-D-glucosamine: step 6/6. Functionally, transfers the gamma-phosphate of ATP to the 4'-position of a tetraacyldisaccharide 1-phosphate intermediate (termed DS-1-P) to form tetraacyldisaccharide 1,4'-bis-phosphate (lipid IVA). This is Tetraacyldisaccharide 4'-kinase from Halothermothrix orenii (strain H 168 / OCM 544 / DSM 9562).